The following is a 264-amino-acid chain: Phosphatidylglycerol--prolipoprotein diacylglyceryl transferase (264 aa).

The next 7 helical transmembrane spans lie at 14–34 (VGPL…LLFM), 57–77 (LLLY…VLFF), 89–109 (ILAI…VLVA), 127–147 (FIAP…FING), 176–196 (QLYQ…VYSA), 202–222 (KAVS…AEFF), and 235–255 (LGLS…VGLL). Arg140 provides a ligand contact to a 1,2-diacyl-sn-glycero-3-phospho-(1'-sn-glycerol).

The protein belongs to the Lgt family.

The protein resides in the cell inner membrane. The catalysed reaction is L-cysteinyl-[prolipoprotein] + a 1,2-diacyl-sn-glycero-3-phospho-(1'-sn-glycerol) = an S-1,2-diacyl-sn-glyceryl-L-cysteinyl-[prolipoprotein] + sn-glycerol 1-phosphate + H(+). Its pathway is protein modification; lipoprotein biosynthesis (diacylglyceryl transfer). Its function is as follows. Catalyzes the transfer of the diacylglyceryl group from phosphatidylglycerol to the sulfhydryl group of the N-terminal cysteine of a prolipoprotein, the first step in the formation of mature lipoproteins. The protein is Phosphatidylglycerol--prolipoprotein diacylglyceryl transferase of Aromatoleum aromaticum (strain DSM 19018 / LMG 30748 / EbN1) (Azoarcus sp. (strain EbN1)).